Reading from the N-terminus, the 344-residue chain is Hydrophobic dipeptide epimerase (344 aa).

Substrate is bound by residues Thr126 and 151-153; that span reads KIK. Mg(2+)-binding residues include Asp184, Glu210, and Asp235. Substrate-binding positions include Lys257 and 307 to 309; that span reads DLD.

Belongs to the mandelate racemase/muconate lactonizing enzyme family. Mg(2+) is required as a cofactor.

Dipeptide epimerase with a preference for hydrophobic substrates. Catalyzes the epimerization of L-Ala-L-Thr, L-Ala-L-Met, L-Ala-L-His, L-Ala-L-Phe, L-Ala-L-Tyr, L-Ala-L-Trp, L-Ile-L-Ala, L-Ile-L-Ser, L-Ile-L-Met, L-Ile-L-His, L-Ile-L-Phe, L-Ile-L-Tyr, L-Ile-L-Trp, L-Phe-L-Met, L-Phe-L-His, L-Phe-L-Phe, L-Phe-L-Tyr, L-Phe-L-Trp, L-Phe-L-Ser, L-Phe-L-Thr and L-Phe-L-Lys (in vitro). This is Hydrophobic dipeptide epimerase from Roseobacter litoralis (strain ATCC 49566 / DSM 6996 / JCM 21268 / NBRC 15278 / OCh 149).